The following is a 572-amino-acid chain: RNA polymerase sigma factor sigB (572 aa).

The N-terminal 39 residues, 1–39, are a transit peptide targeting the chloroplast; that stretch reads MSSCLLPQFKCPPDSFSIHFRTSFCAPKHNKGSVFFQPQ. Positions 215 to 249 are disordered; it reads TRQTERKARRAKGLEKTASGIPSVKTGSSPKKKRL. A Polymerase core binding motif is present at residues 360–373; the sequence is DLVQEGCRGLVRGA. The H-T-H motif DNA-binding region spans 530-549; that stretch reads LQEIGEMMGVSRERVRQIES.

The protein belongs to the sigma-70 factor family. In terms of tissue distribution, highly expressed in cotyledons, to a lesser extent in leaves, sepals and siliques, and barely expressed in roots. Present in seedlings.

It localises to the plastid. The protein resides in the chloroplast. Required for the transition of plastids into chloroplasts by coordinating nuclear and chloroplastic genomes under light conditions. Sigma factors are initiation factors that promote the attachment of plastid-encoded RNA polymerase (PEP) to specific initiation sites and are then released. Promotes the biosynthesis of plastid-encoded tRNAs (e.g. trnE-UUC and trnV-UAC). The protein is RNA polymerase sigma factor sigB (SIGB) of Arabidopsis thaliana (Mouse-ear cress).